A 351-amino-acid polypeptide reads, in one-letter code: UDP-3-O-acylglucosamine N-acyltransferase (351 aa).

His-240 serves as the catalytic Proton acceptor.

It belongs to the transferase hexapeptide repeat family. LpxD subfamily. Homotrimer.

The catalysed reaction is a UDP-3-O-[(3R)-3-hydroxyacyl]-alpha-D-glucosamine + a (3R)-hydroxyacyl-[ACP] = a UDP-2-N,3-O-bis[(3R)-3-hydroxyacyl]-alpha-D-glucosamine + holo-[ACP] + H(+). It functions in the pathway bacterial outer membrane biogenesis; LPS lipid A biosynthesis. Its function is as follows. Catalyzes the N-acylation of UDP-3-O-acylglucosamine using 3-hydroxyacyl-ACP as the acyl donor. Is involved in the biosynthesis of lipid A, a phosphorylated glycolipid that anchors the lipopolysaccharide to the outer membrane of the cell. The polypeptide is UDP-3-O-acylglucosamine N-acyltransferase (Ectopseudomonas mendocina (strain ymp) (Pseudomonas mendocina)).